A 221-amino-acid chain; its full sequence is tRNA (guanine-N(7)-)-methyltransferase (221 aa).

S-adenosyl-L-methionine is bound by residues E51, E76, D103, and D125. D125 is a catalytic residue. The substrate site is built by K129 and D161.

Belongs to the class I-like SAM-binding methyltransferase superfamily. TrmB family.

It catalyses the reaction guanosine(46) in tRNA + S-adenosyl-L-methionine = N(7)-methylguanosine(46) in tRNA + S-adenosyl-L-homocysteine. It functions in the pathway tRNA modification; N(7)-methylguanine-tRNA biosynthesis. In terms of biological role, catalyzes the formation of N(7)-methylguanine at position 46 (m7G46) in tRNA. This is tRNA (guanine-N(7)-)-methyltransferase from Wolbachia pipientis wMel.